Consider the following 358-residue polypeptide: Peptide chain release factor 1 (358 aa).

Q237 is subject to N5-methylglutamine.

This sequence belongs to the prokaryotic/mitochondrial release factor family. Post-translationally, methylated by PrmC. Methylation increases the termination efficiency of RF1.

Its subcellular location is the cytoplasm. Functionally, peptide chain release factor 1 directs the termination of translation in response to the peptide chain termination codons UAG and UAA. The sequence is that of Peptide chain release factor 1 from Streptomyces coelicolor (strain ATCC BAA-471 / A3(2) / M145).